The sequence spans 539 residues: O-phosphoserine--tRNA(Cys) ligase (539 aa).

Substrate contacts are provided by residues 188–190, 233–235, 275–276, and asparagine 327; these read HMT, SAS, and YY.

The protein belongs to the class-II aminoacyl-tRNA synthetase family. O-phosphoseryl-tRNA(Cys) synthetase subfamily. Homotetramer. Interacts with SepCysS.

The enzyme catalyses tRNA(Cys) + O-phospho-L-serine + ATP = O-phospho-L-seryl-tRNA(Cys) + AMP + diphosphate. Its function is as follows. Catalyzes the attachment of O-phosphoserine (Sep) to tRNA(Cys). The sequence is that of O-phosphoserine--tRNA(Cys) ligase from Methanosarcina mazei (strain ATCC BAA-159 / DSM 3647 / Goe1 / Go1 / JCM 11833 / OCM 88) (Methanosarcina frisia).